We begin with the raw amino-acid sequence, 336 residues long: Ketol-acid reductoisomerase (NADP(+)) 1 (336 aa).

The 180-residue stretch at 2–181 (AKVYYEKDVT…GATRAGVLET (180 aa)) folds into the KARI N-terminal Rossmann domain. Residues 25–28 (YGSQ), Arg-48, Ser-52, and 82–85 (DELQ) contribute to the NADP(+) site. The active site involves His-107. Residue Gly-133 coordinates NADP(+). Residues 182–327 (TFKEETETDL…RKLREMMPFV (146 aa)) form the KARI C-terminal knotted domain. 4 residues coordinate Mg(2+): Asp-190, Glu-194, Glu-226, and Glu-230. Ser-251 contacts substrate.

It belongs to the ketol-acid reductoisomerase family. Requires Mg(2+) as cofactor.

The catalysed reaction is (2R)-2,3-dihydroxy-3-methylbutanoate + NADP(+) = (2S)-2-acetolactate + NADPH + H(+). It catalyses the reaction (2R,3R)-2,3-dihydroxy-3-methylpentanoate + NADP(+) = (S)-2-ethyl-2-hydroxy-3-oxobutanoate + NADPH + H(+). The protein operates within amino-acid biosynthesis; L-isoleucine biosynthesis; L-isoleucine from 2-oxobutanoate: step 2/4. It functions in the pathway amino-acid biosynthesis; L-valine biosynthesis; L-valine from pyruvate: step 2/4. Its function is as follows. Involved in the biosynthesis of branched-chain amino acids (BCAA). Catalyzes an alkyl-migration followed by a ketol-acid reduction of (S)-2-acetolactate (S2AL) to yield (R)-2,3-dihydroxy-isovalerate. In the isomerase reaction, S2AL is rearranged via a Mg-dependent methyl migration to produce 3-hydroxy-3-methyl-2-ketobutyrate (HMKB). In the reductase reaction, this 2-ketoacid undergoes a metal-dependent reduction by NADPH to yield (R)-2,3-dihydroxy-isovalerate. This Bacillus cereus (strain ATCC 10987 / NRS 248) protein is Ketol-acid reductoisomerase (NADP(+)) 1.